The sequence spans 406 residues: Argininosuccinate synthase (406 aa).

ATP is bound by residues 13–21 and Ala40; that span reads AYSGGLDTS. 2 residues coordinate L-citrulline: Tyr91 and Ser96. Position 121 (Gly121) interacts with ATP. L-aspartate-binding residues include Thr123, Asn127, and Asp128. An L-citrulline-binding site is contributed by Asn127. Arg131, Ser180, Ser189, Glu265, and Tyr277 together coordinate L-citrulline.

This sequence belongs to the argininosuccinate synthase family. Type 1 subfamily. As to quaternary structure, homotetramer.

It localises to the cytoplasm. The catalysed reaction is L-citrulline + L-aspartate + ATP = 2-(N(omega)-L-arginino)succinate + AMP + diphosphate + H(+). Its pathway is amino-acid biosynthesis; L-arginine biosynthesis; L-arginine from L-ornithine and carbamoyl phosphate: step 2/3. This Syntrophotalea carbinolica (strain DSM 2380 / NBRC 103641 / GraBd1) (Pelobacter carbinolicus) protein is Argininosuccinate synthase.